A 293-amino-acid chain; its full sequence is Undecaprenyl-diphosphatase (293 aa).

Transmembrane regions (helical) follow at residues 3 to 23, 43 to 63, 85 to 105, 109 to 129, 203 to 223, 238 to 258, and 269 to 289; these read IALAIKALILGIVEGLTEFLP, KGKIFEIVIQFGAILAVCWEF, INVIVATIPAITLALIFGKAI, LFNPIVVASAFILGGFVILWA, VATEFSFFLAIPVIFGATVYE, IFAVGFVAAFISAFFCVRWLL, and FAWYRIIFGIIVLATAYTHLI.

Belongs to the UppP family.

Its subcellular location is the cell inner membrane. The catalysed reaction is di-trans,octa-cis-undecaprenyl diphosphate + H2O = di-trans,octa-cis-undecaprenyl phosphate + phosphate + H(+). Its function is as follows. Catalyzes the dephosphorylation of undecaprenyl diphosphate (UPP). Confers resistance to bacitracin. The protein is Undecaprenyl-diphosphatase of Ralstonia pickettii (strain 12J).